The chain runs to 620 residues: Zinc metalloproteinase-disintegrin-like ACLD (620 aa).

A signal peptide spans 1 to 20; that stretch reads MIQVLLVTLCLAVFPYQGSS. Residues 21-189 constitute a propeptide that is removed on maturation; the sequence is IILESGNVND…KKASQLNLTP (169 aa). The region spanning 199–395 is the Peptidase M12B domain; the sequence is KYVEFVVVLD…RRPKCILNEP (197 aa). A Ca(2+)-binding site is contributed by glutamate 202. Residues asparagine 259 and asparagine 265 are each glycosylated (N-linked (GlcNAc...) asparagine). Residue aspartate 286 coordinates Ca(2+). 3 cysteine pairs are disulfide-bonded: cysteine 310-cysteine 390, cysteine 350-cysteine 374, and cysteine 352-cysteine 357. Histidine 335 contacts Zn(2+). Residue glutamate 336 is part of the active site. Residues histidine 339 and histidine 345 each coordinate Zn(2+). Residue asparagine 373 is glycosylated (N-linked (GlcNAc...) asparagine). Ca(2+) contacts are provided by cysteine 390 and asparagine 393. A glycan (N-linked (GlcNAc...) asparagine) is linked at asparagine 396. Positions 403–489 constitute a Disintegrin domain; it reads PPVCGNELLE…ECPTDRFQRN (87 aa). Ca(2+)-binding residues include valine 405, asparagine 408, leucine 410, glutamate 412, glutamate 415, and aspartate 418. Cystine bridges form between cysteine 406/cysteine 435, cysteine 417/cysteine 430, cysteine 419/cysteine 425, cysteine 429/cysteine 452, cysteine 443/cysteine 449, cysteine 448/cysteine 474, cysteine 461/cysteine 481, cysteine 468/cysteine 500, cysteine 493/cysteine 505, cysteine 512/cysteine 562, cysteine 527/cysteine 573, cysteine 540/cysteine 550, cysteine 557/cysteine 599, and cysteine 593/cysteine 604. Residues 467–469 carry the D/ECD-tripeptide motif; sequence DCD. N-linked (GlcNAc...) asparagine glycans are attached at residues asparagine 502 and asparagine 536.

It belongs to the venom metalloproteinase (M12B) family. P-III subfamily. P-IIIa sub-subfamily. In terms of assembly, monomer. Requires Zn(2+) as cofactor. In terms of tissue distribution, expressed by the venom gland.

It is found in the secreted. Inhibited by EDTA and O-phenanthroline. Not inhibited by PMSF, benzamidine, irreversible serine-proteinase inhibitors and cysteine proteinase inhibitor E-64. In terms of biological role, is a potent activator of prothrombin (F2). Does not elicit any hemorrhagic response. Barely inhibits collagen-induced platelet aggregation. Binds neither collagen, nor the jararhagin-monoclonal antibody MAJar3. Hydrolyzes the Aalpha-chain of fibrin and fibrinogen, without affecting the Bbeta- and gamma-chains. Is capable of triggering endothelial pro-inflammatory and procoagulant cell responses, but fails to trigger apoptosis. Induces von Willebrand factor release, and the expression of both ICAM1 and E-selectin (SELE) (without increase in VCAM1) in endothelial cells (HUVEC). Is also able to up-regulate the synthesis of the coagulation factor TF (F3). Enhances nitric oxide (NO) generation, prostacyclin production and interleukin-8 release. The protein is Zinc metalloproteinase-disintegrin-like ACLD of Agkistrodon contortrix laticinctus (Broad-banded copperhead).